A 251-amino-acid polypeptide reads, in one-letter code: L-ascorbate peroxidase 2, cytosolic (251 aa).

Residue His-43 is the Proton acceptor of the active site. Positions 113 to 137 (EVPFHPGRQDKPEPPPEGRLPDATQ) are disordered. A compositionally biased stretch (basic and acidic residues) spans 119 to 132 (GRQDKPEPPPEGRL). His-164 serves as a coordination point for heme b. K(+) is bound by residues Thr-165, Thr-181, Asn-183, Ile-186, and Asp-188.

This sequence belongs to the peroxidase family. Ascorbate peroxidase subfamily. Requires heme b as cofactor. In terms of tissue distribution, expressed in aerial vegetative parts and reproductive organs. Expressed in roots, leaves, stems and flowers. Expressed in young leaves, internodes, blade ears, stems and anthers.

Its subcellular location is the cytoplasm. It catalyses the reaction L-ascorbate + H2O2 = L-dehydroascorbate + 2 H2O. Inhibited by p-chloromercuriphenylsulfonic acid (CMPSA). Plays a key role in hydrogen peroxide removal. Plays an important role in plant growth and development by protecting the seedlings from abiotic stresses through scavenging reactive oxygen species. Required for pollen viability. The polypeptide is L-ascorbate peroxidase 2, cytosolic (Oryza sativa subsp. japonica (Rice)).